The following is a 312-amino-acid chain: MIEFEKPIITKIDENKDYGRFVIEPLERGYGTTLGNSLRRVLLSSLPGAAVTSIKIDGVLHEFDTIPGVREDVMQIILNVKGLAVKSYVEDEKIIELDVEGPAEITAGDILTDSDIEIVNPDHYLFTIAEGHSLKATMTVAKNRGYVPAEGNKKDDAPVGTLAVDSIYTPVKKVNYQVEPARVGSNDGFDKLTIEIMTNGTIIPEDALGLSARVLIEHLNLFTDLTEVAKATEVMKETEKVNDEKVLDRTIEELDLSVRSYNCLKRAGINTVFDLTEKTEPEMMKVRNLGRKSLEEVKIKLADLGLGLKNDK.

Residues 1–226 (MIEFEKPIIT…EHLNLFTDLT (226 aa)) form an alpha N-terminal domain (alpha-NTD) region. An alpha C-terminal domain (alpha-CTD) region spans residues 243–312 (DEKVLDRTIE…DLGLGLKNDK (70 aa)).

It belongs to the RNA polymerase alpha chain family. As to quaternary structure, homodimer. The RNAP catalytic core consists of 2 alpha, 1 beta, 1 beta' and 1 omega subunit. When a sigma factor is associated with the core the holoenzyme is formed, which can initiate transcription.

It catalyses the reaction RNA(n) + a ribonucleoside 5'-triphosphate = RNA(n+1) + diphosphate. In terms of biological role, DNA-dependent RNA polymerase catalyzes the transcription of DNA into RNA using the four ribonucleoside triphosphates as substrates. In Streptococcus agalactiae serotype III (strain NEM316), this protein is DNA-directed RNA polymerase subunit alpha.